Reading from the N-terminus, the 121-residue chain is Aspartate 1-decarboxylase (121 aa).

Residue Ser25 is the Schiff-base intermediate with substrate; via pyruvic acid of the active site. The residue at position 25 (Ser25) is a Pyruvic acid (Ser). Position 57 (Thr57) interacts with substrate. Catalysis depends on Tyr58, which acts as the Proton donor. A substrate-binding site is contributed by 73–75 (GAA).

It belongs to the PanD family. Heterooctamer of four alpha and four beta subunits. The cofactor is pyruvate. Post-translationally, is synthesized initially as an inactive proenzyme, which is activated by self-cleavage at a specific serine bond to produce a beta-subunit with a hydroxyl group at its C-terminus and an alpha-subunit with a pyruvoyl group at its N-terminus.

It is found in the cytoplasm. The catalysed reaction is L-aspartate + H(+) = beta-alanine + CO2. Its pathway is cofactor biosynthesis; (R)-pantothenate biosynthesis; beta-alanine from L-aspartate: step 1/1. Catalyzes the pyruvoyl-dependent decarboxylation of aspartate to produce beta-alanine. The polypeptide is Aspartate 1-decarboxylase (Sulfurimonas denitrificans (strain ATCC 33889 / DSM 1251) (Thiomicrospira denitrificans (strain ATCC 33889 / DSM 1251))).